The chain runs to 114 residues: uncharacterized protein (114 aa).

Residues 90-114 are disordered; it reads VESSQKRKPEESTIGMDAPKKMKRG.

This is an uncharacterized protein from Caenorhabditis elegans.